The sequence spans 128 residues: UPF0325 protein CKO_03204 (128 aa).

This sequence belongs to the UPF0325 family.

The polypeptide is UPF0325 protein CKO_03204 (Citrobacter koseri (strain ATCC BAA-895 / CDC 4225-83 / SGSC4696)).